The chain runs to 251 residues: Flap endonuclease Xni (251 aa).

Aspartate 104 contacts Mg(2+). The region spanning 160 to 250 (VLPRQLPDYW…SGNLQQLRLK (91 aa)) is the 5'-3' exonuclease domain. K(+) contacts are provided by leucine 171, alanine 172, proline 180, valine 182, and valine 185. Residues 184–189 (GVGAKT) are interaction with DNA.

This sequence belongs to the Xni family. Requires Mg(2+) as cofactor. The cofactor is K(+).

Has flap endonuclease activity. During DNA replication, flap endonucleases cleave the 5'-overhanging flap structure that is generated by displacement synthesis when DNA polymerase encounters the 5'-end of a downstream Okazaki fragment. The chain is Flap endonuclease Xni from Yersinia pestis bv. Antiqua (strain Nepal516).